The primary structure comprises 283 residues: Pantothenate synthetase (283 aa).

30 to 37 (MGNLHDGH) contributes to the ATP binding site. His-37 functions as the Proton donor in the catalytic mechanism. Gln-61 lines the (R)-pantoate pocket. Position 61 (Gln-61) interacts with beta-alanine. 149 to 152 (GEKD) provides a ligand contact to ATP. Gln-155 is a binding site for (R)-pantoate. Residue 186–189 (LSSR) coordinates ATP.

The protein belongs to the pantothenate synthetase family. Homodimer.

Its subcellular location is the cytoplasm. It carries out the reaction (R)-pantoate + beta-alanine + ATP = (R)-pantothenate + AMP + diphosphate + H(+). Its pathway is cofactor biosynthesis; (R)-pantothenate biosynthesis; (R)-pantothenate from (R)-pantoate and beta-alanine: step 1/1. Its function is as follows. Catalyzes the condensation of pantoate with beta-alanine in an ATP-dependent reaction via a pantoyl-adenylate intermediate. This is Pantothenate synthetase from Escherichia coli O17:K52:H18 (strain UMN026 / ExPEC).